An 88-amino-acid chain; its full sequence is Small ribosomal subunit protein uS17 (88 aa).

This sequence belongs to the universal ribosomal protein uS17 family. As to quaternary structure, part of the 30S ribosomal subunit.

One of the primary rRNA binding proteins, it binds specifically to the 5'-end of 16S ribosomal RNA. The polypeptide is Small ribosomal subunit protein uS17 (Lactobacillus gasseri (strain ATCC 33323 / DSM 20243 / BCRC 14619 / CIP 102991 / JCM 1131 / KCTC 3163 / NCIMB 11718 / NCTC 13722 / AM63)).